Here is a 179-residue protein sequence, read N- to C-terminus: Dual-action ribosomal maturation protein DarP (179 aa).

It belongs to the DarP family.

The protein localises to the cytoplasm. Member of a network of 50S ribosomal subunit biogenesis factors which assembles along the 30S-50S interface, preventing incorrect 23S rRNA structures from forming. Promotes peptidyl transferase center (PTC) maturation. The chain is Dual-action ribosomal maturation protein DarP from Erwinia tasmaniensis (strain DSM 17950 / CFBP 7177 / CIP 109463 / NCPPB 4357 / Et1/99).